The primary structure comprises 338 residues: Lipoate-protein ligase A (338 aa).

Residues 29–216 (PATQRVLFLW…AFFAHYGERV (188 aa)) enclose the BPL/LPL catalytic domain. Residues Arg-71, 76–79 (GAVF), and Lys-134 contribute to the ATP site. Lys-134 serves as a coordination point for (R)-lipoate.

The protein belongs to the LplA family. In terms of assembly, monomer.

The protein resides in the cytoplasm. The enzyme catalyses L-lysyl-[lipoyl-carrier protein] + (R)-lipoate + ATP = N(6)-[(R)-lipoyl]-L-lysyl-[lipoyl-carrier protein] + AMP + diphosphate + H(+). It functions in the pathway protein modification; protein lipoylation via exogenous pathway; protein N(6)-(lipoyl)lysine from lipoate: step 1/2. It participates in protein modification; protein lipoylation via exogenous pathway; protein N(6)-(lipoyl)lysine from lipoate: step 2/2. In terms of biological role, catalyzes both the ATP-dependent activation of exogenously supplied lipoate to lipoyl-AMP and the transfer of the activated lipoyl onto the lipoyl domains of lipoate-dependent enzymes. This is Lipoate-protein ligase A from Salmonella arizonae (strain ATCC BAA-731 / CDC346-86 / RSK2980).